The primary structure comprises 137 residues: Protein MesC (137 aa).

The chain is Protein MesC (mesC) from Leuconostoc mesenteroides.